A 224-amino-acid polypeptide reads, in one-letter code: Metalloproteinase inhibitor 4 (224 aa).

Positions 1 to 29 (MPWSPLAALSWALVLRLLALLWPPGRGEA) are cleaved as a signal peptide. Cys30 serves as a coordination point for Zn(2+). 2 involved in metalloproteinase-binding regions span residues 30–33 (CSCA) and 99–100 (SS). Intrachain disulfides connect Cys30–Cys102, Cys32–Cys131, Cys42–Cys156, Cys158–Cys205, Cys163–Cys168, and Cys176–Cys197. One can recognise an NTR domain in the interval 30 to 156 (CSCAPAHPQQ…SLNHHYHQNC (127 aa)).

Belongs to the protease inhibitor I35 (TIMP) family. As to expression, expressed in retina, smooth muscle, skin, pancreas, skeletal muscle, heart, brain, lung, kidney and testis. Not found in cartilage, spleen and liver.

The protein localises to the secreted. Its function is as follows. Complexes with metalloproteinases (such as collagenases) and irreversibly inactivates them by binding to their catalytic zinc cofactor. The protein is Metalloproteinase inhibitor 4 (Timp4) of Rattus norvegicus (Rat).